A 426-amino-acid polypeptide reads, in one-letter code: Serine--tRNA ligase (426 aa).

233 to 235 (TAE) contributes to the L-serine binding site. 264–266 (RSE) is a binding site for ATP. E287 contacts L-serine. ATP is bound at residue 351–354 (EISS). Residue S387 participates in L-serine binding.

This sequence belongs to the class-II aminoacyl-tRNA synthetase family. Type-1 seryl-tRNA synthetase subfamily. In terms of assembly, homodimer. The tRNA molecule binds across the dimer.

Its subcellular location is the cytoplasm. It carries out the reaction tRNA(Ser) + L-serine + ATP = L-seryl-tRNA(Ser) + AMP + diphosphate + H(+). The catalysed reaction is tRNA(Sec) + L-serine + ATP = L-seryl-tRNA(Sec) + AMP + diphosphate + H(+). Its pathway is aminoacyl-tRNA biosynthesis; selenocysteinyl-tRNA(Sec) biosynthesis; L-seryl-tRNA(Sec) from L-serine and tRNA(Sec): step 1/1. In terms of biological role, catalyzes the attachment of serine to tRNA(Ser). Is also able to aminoacylate tRNA(Sec) with serine, to form the misacylated tRNA L-seryl-tRNA(Sec), which will be further converted into selenocysteinyl-tRNA(Sec). This Pseudomonas putida (strain GB-1) protein is Serine--tRNA ligase.